The sequence spans 443 residues: Intermediate filament protein ifd-2 (443 aa).

The tract at residues 1–58 is head; it reads MTDPLNPTRLQNHPALARIIESGRTNLPTGITTSGALSAYAQNAAAIIRDNREREKVE. The IF rod domain occupies 55 to 405; sequence EKVEIADLNN…KLMENAEHLR (351 aa). The segment at 59 to 90 is coil 1A; sequence IADLNNRLARYVEKVRFLEAQNRVLENDIGVF. The interval 91–104 is linker 1; it reads RNAAHTHSERIAVY. The segment at 105-239 is coil 1B; it reads FESEKASLFT…SQHDIAIREE (135 aa). The tract at residues 240 to 257 is linker 12; that stretch reads ISKARRDTTNKNRDYFHN. The coil 2 stretch occupies residues 258-403; it reads ELHAAMKEIR…YRKLMENAEH (146 aa). Residues 404 to 443 are tail; the sequence is LRTTVQTHVTYNAPPPPLPQSGPRTTSYHAYGSAYNDSLL.

The protein belongs to the intermediate filament family.

Its subcellular location is the cytoplasm. Cytoplasmic intermediate filaments provide mechanical strength to cells. Not essential protein. The polypeptide is Intermediate filament protein ifd-2 (ifd-2) (Caenorhabditis elegans).